The primary structure comprises 29 residues: Cyclotide cter-K (29 aa).

A cross-link (cyclopeptide (His-Asn)) is located at residues 1-29; that stretch reads HEPCGESCVFIPCITTVVGCSCKNKVCYN. Cystine bridges form between Cys4/Cys20, Cys8/Cys22, and Cys13/Cys27.

Post-translationally, contains 3 disulfide bonds. In terms of processing, this is a cyclic peptide.

Probably participates in a plant defense mechanism. The chain is Cyclotide cter-K from Clitoria ternatea (Butterfly pea).